Here is a 490-residue protein sequence, read N- to C-terminus: GTPase Der (490 aa).

EngA-type G domains are found at residues 3 to 166 (PVIA…PKDE) and 196 to 369 (IKIA…KSAV). GTP is bound by residues 9–16 (GRPNVGKS), 56–60 (DTGGI), 118–121 (NKID), 202–209 (GRPNVGKS), 249–253 (DTAGV), and 314–317 (NKWD). The region spanning 370–454 (TRWPTSRLTQ…PIRIEFKGGE (85 aa)) is the KH-like domain. Positions 452-490 (GGENPYEGNKNTLTDRQVNKKRRMMSHHKKADKKRRDKR) are disordered. A compositionally biased stretch (basic residues) spans 470-490 (NKKRRMMSHHKKADKKRRDKR).

It belongs to the TRAFAC class TrmE-Era-EngA-EngB-Septin-like GTPase superfamily. EngA (Der) GTPase family. Associates with the 50S ribosomal subunit.

GTPase that plays an essential role in the late steps of ribosome biogenesis. The polypeptide is GTPase Der (Pseudomonas savastanoi pv. phaseolicola (strain 1448A / Race 6) (Pseudomonas syringae pv. phaseolicola (strain 1448A / Race 6))).